The chain runs to 725 residues: Methionine--tRNA ligase (725 aa).

The short motif at 27 to 37 (PYANGQIHIGH) is the 'HIGH' region element. Zn(2+) contacts are provided by Cys-158, Cys-161, Cys-171, and Cys-174. The 'KMSKS' region signature appears at 348-352 (KMSKS). An ATP-binding site is contributed by Lys-351. One can recognise a tRNA-binding domain in the interval 619–725 (DFAKIDLRIA…SGAKPGMRVK (107 aa)).

It belongs to the class-I aminoacyl-tRNA synthetase family. MetG type 1 subfamily. Homodimer. Zn(2+) serves as cofactor.

The protein resides in the cytoplasm. The enzyme catalyses tRNA(Met) + L-methionine + ATP = L-methionyl-tRNA(Met) + AMP + diphosphate. In terms of biological role, is required not only for elongation of protein synthesis but also for the initiation of all mRNA translation through initiator tRNA(fMet) aminoacylation. The polypeptide is Methionine--tRNA ligase (Burkholderia mallei (strain NCTC 10247)).